The primary structure comprises 270 residues: Ribosomal RNA small subunit methyltransferase J (270 aa).

S-adenosyl-L-methionine-binding positions include 126–127 (ER) and Asp-182.

It belongs to the methyltransferase superfamily. RsmJ family.

It is found in the cytoplasm. The catalysed reaction is guanosine(1516) in 16S rRNA + S-adenosyl-L-methionine = N(2)-methylguanosine(1516) in 16S rRNA + S-adenosyl-L-homocysteine + H(+). Functionally, specifically methylates the guanosine in position 1516 of 16S rRNA. This chain is Ribosomal RNA small subunit methyltransferase J, found in Acinetobacter baylyi (strain ATCC 33305 / BD413 / ADP1).